The primary structure comprises 66 residues: Toxin Cll1 (66 aa).

The 66-residue stretch at 1-66 (KEGYLVNKST…TYPLPNKSCS (66 aa)) folds into the LCN-type CS-alpha/beta domain. Cystine bridges form between Cys12/Cys65, Cys16/Cys41, Cys25/Cys46, and Cys29/Cys48.

It belongs to the long (4 C-C) scorpion toxin superfamily. Sodium channel inhibitor family. Beta subfamily. In terms of tissue distribution, expressed by the venom gland.

Its subcellular location is the secreted. Functionally, beta toxin that binds site-4 of sodium channels (Nav) and reduces peak current (observed on Nav1.1/SCN1A, Nav1.2/SCN2A, Nav1.3/SCN3A, Nav1.4/SCN5A, Nav1.5/SCN4A, and Nav1.6/SCN8A (IC(50)=44.9 nM)), shifts the voltage of activation toward more negative potentials (observed on Nav1.6, Nav1.1 (weak), Nav1.2 (weak), and Nav1.7 (weak)), and induces resurgent currents at negative voltages following brief and strong depolarizations (observed on Nav1.6, Nav1.1 (weak), Nav1.2 (weak), and Nav1.4 (weak)). This toxin is only active on crustaceans. This is Toxin Cll1 from Centruroides limpidus (Mexican scorpion).